The following is a 201-amino-acid chain: Adenylyl-sulfate kinase (201 aa).

35–42 (GLSGSGKS) is a binding site for ATP. S109 functions as the Phosphoserine intermediate in the catalytic mechanism.

Belongs to the APS kinase family.

The catalysed reaction is adenosine 5'-phosphosulfate + ATP = 3'-phosphoadenylyl sulfate + ADP + H(+). The protein operates within sulfur metabolism; hydrogen sulfide biosynthesis; sulfite from sulfate: step 2/3. In terms of biological role, catalyzes the synthesis of activated sulfate. The sequence is that of Adenylyl-sulfate kinase from Shigella flexneri.